The following is a 430-amino-acid chain: Adenylosuccinate synthetase (430 aa).

Residues 12–18 (GDEGKGK) and 40–42 (GHT) each bind GTP. The active-site Proton acceptor is Asp-13. Mg(2+)-binding residues include Asp-13 and Gly-40. IMP is bound by residues 13–16 (DEGK), 38–41 (NAGH), Thr-130, Arg-144, Gln-224, Thr-239, and Arg-303. His-41 acts as the Proton donor in catalysis. Substrate is bound at residue 299–305 (VVTGRKR). Residues Arg-305, 331–333 (KLD), and 413–415 (STS) each bind GTP.

The protein belongs to the adenylosuccinate synthetase family. In terms of assembly, homodimer. It depends on Mg(2+) as a cofactor.

It localises to the cytoplasm. It carries out the reaction IMP + L-aspartate + GTP = N(6)-(1,2-dicarboxyethyl)-AMP + GDP + phosphate + 2 H(+). It functions in the pathway purine metabolism; AMP biosynthesis via de novo pathway; AMP from IMP: step 1/2. Its function is as follows. Plays an important role in the de novo pathway of purine nucleotide biosynthesis. Catalyzes the first committed step in the biosynthesis of AMP from IMP. The polypeptide is Adenylosuccinate synthetase (Methylobacterium nodulans (strain LMG 21967 / CNCM I-2342 / ORS 2060)).